The chain runs to 976 residues: Ephrin type-A receptor 2 (976 aa).

An N-terminal signal peptide occupies residues 1 to 23; the sequence is MELQAARACFALLWGCALAAAAA. The mediates interaction with CLDN4 stretch occupies residues 1–206; that stretch reads MELQAARACF…YYKKCPELLQ (206 aa). Residues 24–537 are Extracellular-facing; sequence AQGKEVVLLD…SPEGSGNLAV (514 aa). The Eph LBD domain maps to 28–206; it reads EVVLLDFAAA…YYKKCPELLQ (179 aa). Cystine bridges form between Cys-70/Cys-188 and Cys-105/Cys-115. In terms of domain architecture, Fibronectin type-III 1 spans 328–432; the sequence is PPSAPHYLTA…TSRSFRTASV (105 aa). Residues Asn-407 and Asn-435 are each glycosylated (N-linked (GlcNAc...) asparagine). The 92-residue stretch at 438-529 folds into the Fibronectin type-III 2 domain; sequence EPPKVRLEGR…KVHEFQTLSP (92 aa). The chain crosses the membrane as a helical span at residues 538–558; that stretch reads IGGVAVGVVLLLVLAGVGFFI. The Cytoplasmic portion of the chain corresponds to 559–976; that stretch reads HRRRKNQRAR…DQVNTVGIPI (418 aa). Position 570 is a phosphoserine (Ser-570). Residue Tyr-575 is modified to Phosphotyrosine. The residue at position 579 (Ser-579) is a Phosphoserine. The residue at position 588 (Tyr-588) is a Phosphotyrosine; by autocatalysis. Tyr-594 bears the Phosphotyrosine mark. The mediates interaction with ARHGEF16 and ELMO2 stretch occupies residues 606–906; the sequence is TEIHPSCVTR…STSGSEGVPF (301 aa). Positions 613-875 constitute a Protein kinase domain; sequence VTRQKVIGAG…DIVSILDKLI (263 aa). 619–627 contacts ATP; sequence IGAGEFGEV. A Phosphotyrosine modification is found at Tyr-628. Lys-646 is a binding site for ATP. Thr-647 bears the Phosphothreonine mark. Phosphotyrosine; by autocatalysis is present on Tyr-735. The active-site Proton acceptor is Asp-739. Tyr-772 carries the post-translational modification Phosphotyrosine. A phosphoserine mark is found at Ser-869 and Ser-892. The interval 886–976 is negatively regulates interaction with ARHGEF16; it reads DFDPRVSIRL…DQVNTVGIPI (91 aa). At Ser-897 the chain carries Phosphoserine; by PKB/AKT1, RPS6KA1, RPS6KA3 AND PKA. Position 901 is a phosphoserine (Ser-901). The SAM domain maps to 904-968; it reads VPFRTVSEWL…AYSLLGLKDQ (65 aa). Tyr-921 is subject to Phosphotyrosine; by autocatalysis. Tyr-930 carries the phosphotyrosine modification. A PDZ-binding motif is present at residues 974-976; that stretch reads IPI.

The protein belongs to the protein kinase superfamily. Tyr protein kinase family. Ephrin receptor subfamily. Homodimer. Interacts with SLA. Interacts (phosphorylated form) with VAV2, VAV3 and PI3-kinase p85 subunit (PIK3R1, PIK3R2 or PIK3R3); critical for the EFNA1-induced activation of RAC1 which stimulates cell migration. Interacts with INPPL1; regulates activated EPHA2 endocytosis and degradation. Interacts (inactivated form) with PTK2/FAK1 and interacts (EFNA1 ligand-activated form) with PTPN11; regulates integrin-mediated adhesion. Interacts with ARHGEF16, DOCK4 and ELMO2; mediates ligand-independent activation of RAC1 which stimulates cell migration. Interacts with CLDN4; phosphorylates CLDN4 and may regulate tight junctions. Interacts with ACP1. Interacts (via SAM domain) with ANKS1A (via SAM domain). Interacts with CEMIP. Interacts with NCK1; may regulate EPHA2 activity in cell migration and adhesion. Interacts with TIMD4. As to quaternary structure, (Microbial infection) Interacts with human herpes virus 8/HHV-8 glycoprotein L/gL and glycoprotein H/gH heterodimer; this interaction triggers EPHA2 phosphorylation and endocytosis, allowing virus entry. In terms of assembly, (Microbial infection) Interacts with human cytomegalovirus (HCMV) glycoprotein L/gL and glycoprotein H/gH heterodimer. (Microbial infection) Interacts with Epstein-Barr virus/HHV-4 glycoprotein L/gL and glycoprotein H/gH heterodimer; this interaction facilitates virus internalization and fusion. Autophosphorylates. Phosphorylated on tyrosine upon binding and activation by EFNA1. Phosphorylated residues Tyr-588 and Tyr-594 are required for binding VAV2 and VAV3 while phosphorylated residues Tyr-735 and Tyr-930 are required for binding PI3-kinase p85 subunit (PIK3R1, PIK3R2 or PIK3R3). These phosphorylated residues are critical for recruitment of VAV2 and VAV3 and PI3-kinase p85 subunit which transduce downstream signaling to activate RAC1 GTPase and cell migration. Dephosphorylation of Tyr-930 by PTPRF prevents the interaction of EPHA2 with NCK1. Phosphorylated at Ser-897 by PKB; serum-induced phosphorylation which targets EPHA2 to the cell leading edge and stimulates cell migration. Phosphorylation by PKB is inhibited by EFNA1-activated EPHA2 which regulates PKB activity via a reciprocal regulatory loop. Phosphorylated at Ser-897 in response to TNF by RPS6KA1 and RPS6KA3; RPS6KA-EPHA2 signaling pathway controls cell migration. Phosphorylated at Ser-897 by PKA; blocks cell retraction induced by EPHA2 kinase activity. Dephosphorylated by ACP1. In terms of processing, ubiquitinated by CHIP/STUB1. Ubiquitination is regulated by the HSP90 chaperone and regulates the receptor stability and activity through proteasomal degradation. ANKS1A prevents ubiquitination and degradation. As to expression, expressed in brain and glioma tissue and glioma cell lines (at protein level). Expressed most highly in tissues that contain a high proportion of epithelial cells, e.g. skin, intestine, lung, and ovary.

The protein localises to the cell membrane. Its subcellular location is the cell projection. It localises to the ruffle membrane. It is found in the lamellipodium membrane. The protein resides in the cell junction. The protein localises to the focal adhesion. It catalyses the reaction L-tyrosyl-[protein] + ATP = O-phospho-L-tyrosyl-[protein] + ADP + H(+). Functionally, receptor tyrosine kinase which binds promiscuously membrane-bound ephrin-A family ligands residing on adjacent cells, leading to contact-dependent bidirectional signaling into neighboring cells. The signaling pathway downstream of the receptor is referred to as forward signaling while the signaling pathway downstream of the ephrin ligand is referred to as reverse signaling. Activated by the ligand ephrin-A1/EFNA1 regulates migration, integrin-mediated adhesion, proliferation and differentiation of cells. Regulates cell adhesion and differentiation through DSG1/desmoglein-1 and inhibition of the ERK1/ERK2 (MAPK3/MAPK1, respectively) signaling pathway. May also participate in UV radiation-induced apoptosis and have a ligand-independent stimulatory effect on chemotactic cell migration. During development, may function in distinctive aspects of pattern formation and subsequently in development of several fetal tissues. Involved for instance in angiogenesis, in early hindbrain development and epithelial proliferation and branching morphogenesis during mammary gland development. Engaged by the ligand ephrin-A5/EFNA5 may regulate lens fiber cells shape and interactions and be important for lens transparency development and maintenance. With ephrin-A2/EFNA2 may play a role in bone remodeling through regulation of osteoclastogenesis and osteoblastogenesis. In terms of biological role, (Microbial infection) Acts as a receptor for hepatitis C virus (HCV) in hepatocytes and facilitates its cell entry. Mediates HCV entry by promoting the formation of the CD81-CLDN1 receptor complexes that are essential for HCV entry and by enhancing membrane fusion of cells expressing HCV envelope glycoproteins. Acts as a receptor for human cytomegalovirus (HCMV) to mediate viral entry and fusion in glioblastoma cells. This chain is Ephrin type-A receptor 2 (EPHA2), found in Homo sapiens (Human).